Reading from the N-terminus, the 631-residue chain is tRNA uridine 5-carboxymethylaminomethyl modification enzyme MnmG (631 aa).

Residues 13 to 18 (GGGHAG), valine 125, and serine 180 each bind FAD. 273 to 287 (GPRYCPSIEDKVMRF) contributes to the NAD(+) binding site. Glutamine 370 lines the FAD pocket.

The protein belongs to the MnmG family. In terms of assembly, homodimer. Heterotetramer of two MnmE and two MnmG subunits. FAD serves as cofactor.

The protein resides in the cytoplasm. Functionally, NAD-binding protein involved in the addition of a carboxymethylaminomethyl (cmnm) group at the wobble position (U34) of certain tRNAs, forming tRNA-cmnm(5)s(2)U34. The polypeptide is tRNA uridine 5-carboxymethylaminomethyl modification enzyme MnmG (Vibrio parahaemolyticus serotype O3:K6 (strain RIMD 2210633)).